Here is a 779-residue protein sequence, read N- to C-terminus: Aconitate hydratase, mitochondrial (779 aa).

A mitochondrion-targeting transit peptide spans 1-28; that stretch reads MIAMDRIARIPIARWTSRAFRVSAAARQ. Substrate is bound by residues glutamine 97 and 190–192; that span reads DSH. [4Fe-4S] cluster is bound by residues cysteine 383, cysteine 446, and cysteine 449. Residues arginine 472, arginine 477, arginine 605, and 668–669 contribute to the substrate site; that span reads SR.

It belongs to the aconitase/IPM isomerase family. As to quaternary structure, monomer. The cofactor is [4Fe-4S] cluster.

It localises to the mitochondrion. The enzyme catalyses citrate = D-threo-isocitrate. The protein operates within carbohydrate metabolism; tricarboxylic acid cycle; isocitrate from oxaloacetate: step 2/2. Its function is as follows. Catalyzes the isomerization of citrate to isocitrate via cis-aconitate. This chain is Aconitate hydratase, mitochondrial, found in Gracilaria gracilis (Red alga).